A 380-amino-acid chain; its full sequence is M-protease (380 aa).

A signal peptide spans 1–27 (MKKPLGKIVASTALLISVAFSSSIASA). Residues 28–111 (AEEAKEKYLI…IEEDAEVTTM (84 aa)) constitute a propeptide that is removed on maturation. Positions 34–111 (KYLIGFNEQE…IEEDAEVTTM (78 aa)) constitute an Inhibitor I9 domain. Gln-113 contributes to the Ca(2+) binding site. In terms of domain architecture, Peptidase S8 spans 116–379 (PWGISRVQAP…SGLVNAEAAT (264 aa)). Asp-143 (charge relay system) is an active-site residue. Residue Asp-151 participates in Ca(2+) binding. Residue His-173 is the Charge relay system of the active site. 8 residues coordinate Ca(2+): Leu-184, Asn-186, Ile-188, Val-190, Ala-274, Tyr-276, Ala-279, and Asp-302. Ser-326 serves as the catalytic Charge relay system.

Belongs to the peptidase S8 family. As to quaternary structure, monomer. It depends on Ca(2+) as a cofactor.

Its subcellular location is the secreted. With respect to regulation, activity is inhibited by phenylmethylsulfonyl fluoride and chymostatin. Alkaline serine protease that cleaves various substrates, including N-succinyl-Ala-Ala-Pro-Phe-pNA, N-succinyl-Ala-Ala-Pro-MetpNA, oxidized insulin B chain, casein, hemoglobin and scleroproteins, such as keratin, alpha-keratin and elastin. The protein is M-protease (aprE) of Shouchella clausii (strain KSM-K16) (Alkalihalobacillus clausii).